The primary structure comprises 400 residues: Unsaturated glucuronyl hydrolase (400 aa).

The N-terminal stretch at 1–20 (MRKLVYLVLVLGLTFLNVRC) is a signal peptide. Residue Asp-120 is the Nucleophile of the active site. The active-site Proton donor is the Asp-181.

The protein belongs to the glycosyl hydrolase 88 family.

The protein localises to the cell surface. In terms of biological role, unsaturated glucuronyl hydrolase involved in ulvan degradation. Ulvan is the main polysaccharide component of the Ulvales (green seaweed) cell wall. It is composed of disaccharide building blocks comprising 3-sulfated rhamnose (Rha3S) linked to D-glucuronic acid (GlcA), L-iduronic acid (IduA), or D-xylose (Xyl). Unsaturated glucuronyl hydrolase catalyzes the cleavage of the unsaturated 4-deoxy-L-threo-hex-4-enopyranosiduronic acid (deltaUA) at the non-reducing end of ulvan oligomers, thus forming 5-dehydro-4-deoxy-D-glucuronate. In Formosa agariphila (strain DSM 15362 / KCTC 12365 / LMG 23005 / KMM 3901 / M-2Alg 35-1), this protein is Unsaturated glucuronyl hydrolase.